Consider the following 475-residue polypeptide: UDP-N-acetylmuramate--L-alanine ligase (475 aa).

121-127 (GTHGKTT) contributes to the ATP binding site.

The protein belongs to the MurCDEF family.

The protein resides in the cytoplasm. The enzyme catalyses UDP-N-acetyl-alpha-D-muramate + L-alanine + ATP = UDP-N-acetyl-alpha-D-muramoyl-L-alanine + ADP + phosphate + H(+). The protein operates within cell wall biogenesis; peptidoglycan biosynthesis. In terms of biological role, cell wall formation. This is UDP-N-acetylmuramate--L-alanine ligase from Salinibacter ruber (strain DSM 13855 / M31).